A 358-amino-acid chain; its full sequence is MAPATPATHDPALSHGAPPAPGAPAPANAPPNASGDIAGMQLSGLDQSQIMNLLRSLPGMFSGGKIPDQGQGNKEDAAQTLSNLAQAQPYGQQLPLHYQAGGPGGLPGINDPGPSTHPRGPPNLGQLSAVAMQAAPAPIQHPDQQTNRNDGEQAGNASASTSGKDGDNAEFVPPPAPAPTTGRRGGRSATMGSDEWSRQRKDNHKEVERRRRGNINEGINELGRIVPSGSGEKAKGAILSRAVQYIHHLKENEARNIEKWTLEKLLMDQAMGDLQAQLEEVKRLWEEERMARTRLEAELEVLRNMNGVNAGSAPASKDESAAGTKRRSTDGAEAATAATESSTANAEGERDGKRQRTE.

Disordered stretches follow at residues 1–40 (MAPATPATHDPALSHGAPPAPGAPAPANAPPNASGDIAGM) and 62–212 (SGGK…RRRR). Residues 18–29 (PPAPGAPAPANA) are compositionally biased toward pro residues. Over residues 79–91 (QTLSNLAQAQPYG) the composition is skewed to polar residues. Low complexity predominate over residues 179 to 190 (PTTGRRGGRSAT). Residues 195 to 209 (EWSRQRKDNHKEVER) show a composition bias toward basic and acidic residues. The segment at 199 to 212 (QRKDNHKEVERRRR) is basic motif. The bHLH domain occupies 199-249 (QRKDNHKEVERRRRGNINEGINELGRIVPSGSGEKAKGAILSRAVQYIHHL). Residues 213–249 (GNINEGINELGRIVPSGSGEKAKGAILSRAVQYIHHL) form a helix-loop-helix motif region. Residues 264-306 (KLLMDQAMGDLQAQLEEVKRLWEEERMARTRLEAELEVLRNMN) adopt a coiled-coil conformation. The segment at 308 to 358 (VNAGSAPASKDESAAGTKRRSTDGAEAATAATESSTANAEGERDGKRQRTE) is disordered. Over residues 331–346 (GAEAATAATESSTANA) the composition is skewed to low complexity. Basic and acidic residues predominate over residues 347-358 (EGERDGKRQRTE).

Its subcellular location is the nucleus. Its function is as follows. Transcription factor that may regulate the expression of the gene cluster that mediates the biosynthesis of psilocybin, a psychotropic tryptamine-derived natural product. The chain is Psilocybin cluster transcription regulator from Psilocybe cubensis (Psychedelic mushroom).